A 495-amino-acid polypeptide reads, in one-letter code: Guanosine-5'-triphosphate,3'-diphosphate pyrophosphatase (495 aa).

It belongs to the GppA/Ppx family. GppA subfamily.

It carries out the reaction guanosine 3'-diphosphate 5'-triphosphate + H2O = guanosine 3',5'-bis(diphosphate) + phosphate + H(+). It participates in purine metabolism; ppGpp biosynthesis; ppGpp from GTP: step 2/2. Its function is as follows. Catalyzes the conversion of pppGpp to ppGpp. Guanosine pentaphosphate (pppGpp) is a cytoplasmic signaling molecule which together with ppGpp controls the 'stringent response', an adaptive process that allows bacteria to respond to amino acid starvation, resulting in the coordinated regulation of numerous cellular activities. In Enterobacter sp. (strain 638), this protein is Guanosine-5'-triphosphate,3'-diphosphate pyrophosphatase.